The chain runs to 764 residues: MKVDIDTSDKLYADAWLGFKGTDWKNEINVRDFIQHNYTPYEGDESFLAEATPATTELWEKVMEGIRIENATHAPVDFDTNIATTITAHDAGYINQPLEKIVGLQTDAPLKRALHPFGGINMIKSSFHAYGREMDSEFEYLFTDLRKTHNQGVFDVYSPDMLRCRKSGVLTGLPDGYGRGRIIGDYRRVALYGISYLVRERELQFADLQSRLEKGEDLEATIRLREELAEHRHALLQIQEMAAKYGFDISRPAQNAQEAVQWLYFAYLAAVKSQNGGAMSLGRTASFLDIYIERDFKAGVLNEQQAQELIDHFIMKIRMVRFLRTPEFDSLFSGDPIWATEVIGGMGLDGRTLVTKNSFRYLHTLHTMGPAPEPNLTILWSEELPIAFKKYAAQVSIVTSSLQYENDDLMRTDFNSDDYAIACCVSPMVIGKQMQFFGARANLAKTLLYAINGGVDEKLKIQVGPKTAPLMDDVLDYDKVMDSLDHFMDWLAVQYISALNIIHYMHDKYSYEASLMALHDRDVYRTMACGIAGLSVATDSLSAIKYARVKPIRDENGLAVDFEIDGEYPQYGNNDERVDSIACDLVERFMKKIKALPTYRNAVPTQSILTITSNVVYGQKTGNTPDGRRAGTPFAPGANPMHGRDRKGAVASLTSVAKLPFTYAKDGISYTFSIVPAALGKEDPVRKTNLVGLLDGYFHHEADVEGGQHLNVNVMNREMLLDAIEHPEKYPNLTIRVSGYAVRFNALTREQQQDVISRTFTQAL.

A PFL domain is found at 7–629 (TSDKLYADAW…KTGNTPDGRR (623 aa)). C423 (S-acetylcysteine intermediate) is an active-site residue. C424 acts as the Cysteine radical intermediate in catalysis. A disordered region spans residues 622–645 (GNTPDGRRAGTPFAPGANPMHGRD). Residues 636–764 (PGANPMHGRD…VISRTFTQAL (129 aa)) enclose the Glycine radical domain. G739 bears the Glycine radical mark.

Belongs to the glycyl radical enzyme (GRE) family. PFL subfamily.

It localises to the cytoplasm. It catalyses the reaction 2-oxobutanoate + CoA = propanoyl-CoA + formate. The catalysed reaction is formate + acetyl-CoA = pyruvate + CoA. It participates in amino-acid degradation; L-threonine degradation via propanoate pathway; propanoate from L-threonine: step 2/4. Its activity is regulated as follows. Dependent on PFL-activase. In terms of biological role, catalyzes the cleavage of 2-ketobutyrate to propionyl-CoA and formate. It can also use pyruvate as substrate. This is PFL-like enzyme TdcE (tdcE) from Escherichia coli (strain K12).